The primary structure comprises 301 residues: Ribonuclease H2 subunit A (301 aa).

Residue Met-1 is modified to N-acetylmethionine. One can recognise an RNase H type-2 domain in the interval 28–251; that stretch reads PCVLGVDEAG…AQAILEKEAE (224 aa). Positions 34, 35, and 142 each coordinate a divalent metal cation. Thr-217 bears the Phosphothreonine mark. At Ser-258 the chain carries Phosphoserine.

The protein belongs to the RNase HII family. Eukaryotic subfamily. The RNase H2 complex is a heterotrimer composed of the catalytic subunit RNASEH2A and the non-catalytic subunits RNASEH2B and RNASEH2C. The cofactor is Mn(2+). Mg(2+) is required as a cofactor.

The protein localises to the nucleus. The catalysed reaction is Endonucleolytic cleavage to 5'-phosphomonoester.. Catalytic subunit of RNase HII, an endonuclease that specifically degrades the RNA of RNA:DNA hybrids. Participates in DNA replication, possibly by mediating the removal of lagging-strand Okazaki fragment RNA primers during DNA replication. Mediates the excision of single ribonucleotides from DNA:RNA duplexes. The protein is Ribonuclease H2 subunit A (Rnaseh2a) of Rattus norvegicus (Rat).